The following is a 63-amino-acid chain: Putative ankyrin repeat protein RF_p14 (63 aa).

2 ANK repeats span residues 11–43 and 44–63; these read KLNQKLMRAAATGDIEAVQKLVLRGADIYCRDH and QGDTALSLAAGSGYLDILDI.

The polypeptide is Putative ankyrin repeat protein RF_p14 (Rickettsia felis (strain ATCC VR-1525 / URRWXCal2) (Rickettsia azadi)).